The sequence spans 217 residues: Cytidylate kinase (217 aa).

10 to 18 (GPAGAGKST) serves as a coordination point for ATP.

It belongs to the cytidylate kinase family. Type 1 subfamily.

It is found in the cytoplasm. It catalyses the reaction CMP + ATP = CDP + ADP. The catalysed reaction is dCMP + ATP = dCDP + ADP. The chain is Cytidylate kinase from Clostridium botulinum (strain Loch Maree / Type A3).